The sequence spans 487 residues: MESTNRFMIGVFGPTGVGKTKLGVSIAKSVHGQVISVDSLQCYSPGGIVTAKPTPEEMDGIEHHMIGYLEAEEEPTNFVAEAVERLEKLCDHGAIPVVVGGSTSLTLPLLRGALNRGWRMAAITLLPHQSTYLGNIESRVDDMLEAGLLEELSGLKSLEDRNLNGKPNFHKGIWKTIGYQELYPYLEAQRSDGHCDELLKSGLASMKENTFQYGNTQLEWIRQALSPFLHAEKIANMSLTVVDKTSWTRGVEKPAIRMASDFCYASTSISFHPINEPKPRVICIFGGSSSGNDPAHMEAAKSLGRVCHENSIKLVYGGGTTGVMGAIASTLVELSGPNAVHGIIPEALLKYEAKESGRHAQDSAFARYGRRTVVKDMHTRKRLMIQEVIDGGDGSGFVGLSGGYGTLEELFEVITWHQLGIHDRGVCLLNMDGFFDGLVNWLGNVVKKGFIGLQDAAILSIASTAEGVVKCLDQKPGFSRKGELEWV.

The tract at residues 1–266 (MESTNRFMIG…RMASDFCYAS (266 aa)) is adenylate isopentenyltransferase. The interval 267–487 (TSISFHPINE…FSRKGELEWV (221 aa)) is cytokinin riboside 5'-monophosphate phosphoribohydrolase. Residues glutamate 352, 380-381 (RK), 403-409 (GYGTLEE), and threonine 415 each bind substrate.

This sequence in the N-terminal section; belongs to the IPP transferase family. In the C-terminal section; belongs to the LOG family.

The enzyme catalyses dimethylallyl diphosphate + AMP = N(6)-(dimethylallyl)adenosine 5'-phosphate + diphosphate. It catalyses the reaction N(6)-(dimethylallyl)adenosine 5'-phosphate + H2O = N(6)-dimethylallyladenine + D-ribose 5-phosphate. It carries out the reaction 9-ribosyl-trans-zeatin 5'-phosphate + H2O = trans-zeatin + D-ribose 5-phosphate. Its pathway is secondary metabolite biosynthesis. Functionally, bifunctional cytokinin synthesis protein; part of the gene cluster that mediates the biosynthesis of cytokinins such as fusatin, fusatinic acids or 8-oxofusatin, known for their growth promoting and anti-senescence activities toward host plants. FCK1 is a bifunctional enzyme that performs the first steps in the biosynthesis of Fusarium cytokinins. It first condenses adenosine monophosphate (AMP) with dimethylallyl diphosphate (DMAPP) to yield isoprenyl adenosine monophosphate. It then catalyzes the removal of the phosphoribose to produce isopentenylaldehyde. The cytochrome P450 monooxygenase then converts isopentenylaldehyde to trans-zeatin. A condensation step converts trans-zeatin to fusatin which is further modified to produce fusatinic acid. The mechanism for oxidation of fusatin to fusatinic acid remains unknown. 8-oxofusatin could be produced through several pathways, via direct oxygenation of fusatin, or via the 8-oxo-pentenyladenine intermediate which itself must arise from either the prenylation of 8-oxo-AMP by FCK1 and/or oxygenation of isopentenylaldehyde. Both the FCK3 and FCK4 enzymes act downstream of the identified cytokinins to produce yet unidentified compounds. The chain is Bifunctional cytokinin biosynthesis protein from Fusarium pseudograminearum (strain CS3096) (Wheat and barley crown-rot fungus).